A 306-amino-acid polypeptide reads, in one-letter code: tRNA dimethylallyltransferase (306 aa).

Position 13–20 (13–20 (GPTGAGKT)) interacts with ATP. 15–20 (TGAGKT) is a substrate binding site. Interaction with substrate tRNA regions lie at residues 38 to 41 (DSRQ) and 161 to 165 (QRNAR).

Belongs to the IPP transferase family. In terms of assembly, monomer. It depends on Mg(2+) as a cofactor.

The enzyme catalyses adenosine(37) in tRNA + dimethylallyl diphosphate = N(6)-dimethylallyladenosine(37) in tRNA + diphosphate. Its function is as follows. Catalyzes the transfer of a dimethylallyl group onto the adenine at position 37 in tRNAs that read codons beginning with uridine, leading to the formation of N6-(dimethylallyl)adenosine (i(6)A). The chain is tRNA dimethylallyltransferase from Maridesulfovibrio salexigens (strain ATCC 14822 / DSM 2638 / NCIMB 8403 / VKM B-1763) (Desulfovibrio salexigens).